A 180-amino-acid polypeptide reads, in one-letter code: Alkyl hydroperoxide reductase AhpD (180 aa).

Cys131 acts as the Proton donor in catalysis. Cys131 and Cys134 are oxidised to a cystine. The active-site Cysteine sulfenic acid (-SOH) intermediate is Cys134.

It belongs to the AhpD family.

It carries out the reaction N(6)-[(R)-dihydrolipoyl]-L-lysyl-[lipoyl-carrier protein] + a hydroperoxide = N(6)-[(R)-lipoyl]-L-lysyl-[lipoyl-carrier protein] + an alcohol + H2O. Its function is as follows. Antioxidant protein with alkyl hydroperoxidase activity. Required for the reduction of the AhpC active site cysteine residues and for the regeneration of the AhpC enzyme activity. The polypeptide is Alkyl hydroperoxide reductase AhpD (Hyphomonas neptunium (strain ATCC 15444)).